Consider the following 115-residue polypeptide: Small ribosomal subunit protein bS6 (115 aa).

It belongs to the bacterial ribosomal protein bS6 family.

In terms of biological role, binds together with bS18 to 16S ribosomal RNA. The protein is Small ribosomal subunit protein bS6 of Picosynechococcus sp. (strain ATCC 27264 / PCC 7002 / PR-6) (Agmenellum quadruplicatum).